Here is a 639-residue protein sequence, read N- to C-terminus: CD2-associated protein (639 aa).

Positions 1 to 59 (MVDYIVEYDYDAVHDDELTIRVGEIIRNVKKLQEEGWLEGELNGRRGMFPDNFVKEIKR) constitute an SH3 1; truncated domain. Residues 1 to 175 (MVDYIVEYDY…EVTDDGETHE (175 aa)) are interaction with ANLN and localization to the midbody. Lys-58 is covalently cross-linked (Glycyl lysine isopeptide (Lys-Gly) (interchain with G-Cter in SUMO2)). A phosphoserine mark is found at Ser-67, Ser-80, and Ser-86. The region spanning 108–167 (TKKRQCKVLFEYIPQNEDELELKVGDIIDINEEVEEGWWSGTLNNKLGLFPSNFVKELEV) is the SH3 2 domain. Residues 168 to 177 (TDDGETHEAQ) are compositionally biased toward basic and acidic residues. The disordered stretch occupies residues 168 to 209 (TDDGETHEAQDDSETVLAGPTSPIPSLGNVSETASGSVTQPK). Polar residues predominate over residues 195–207 (GNVSETASGSVTQ). Ser-224 is subject to Phosphoserine. The tract at residues 227 to 256 (LRTRTSSSETEEKKPEKPLILQSLGPKTQS) is disordered. An SH3 3 domain is found at 269-330 (KAKEYCRTLF…PDNFAVQINE (62 aa)). Residues 333 to 428 (KDFPKPKKPP…PPPPIAKING (96 aa)) are disordered. Short sequence motifs (SH3-binding) lie at residues 336–352 (PKPK…APKP), 378–397 (KPSK…PPTK), and 410–422 (PKRP…PPPP). Pro residues predominate over residues 341 to 351 (PPPPAKAPAPK). Residues 356-379 (AAEKKYFSLKPEEKDEKSTLEQKP) show a composition bias toward basic and acidic residues. Pro residues predominate over residues 385-395 (PQVPPKKPTPP). Ser-458, Ser-463, Ser-469, Ser-510, and Ser-514 each carry phosphoserine. Residue Lys-523 forms a Glycyl lysine isopeptide (Lys-Gly) (interchain with G-Cter in SUMO2) linkage. Thr-565 carries the post-translational modification Phosphothreonine. Residues 577 to 638 (DVKKNSLDEL…IEKLKKAVLS (62 aa)) are a coiled coil. A Phosphoserine modification is found at Ser-582.

In terms of assembly, homodimer. Interacts with F-actin, PKD2, NPHS1 and NPHS2. Interacts with WTIP. Interacts with DDN; interaction is direct. Interacts (via SH3 2 domain) with CBL (via phosphorylated C-terminus). Interacts with BCAR1/p130Cas (via SH3 domain). Interacts with MVB12A and ARHGAP17. Interacts with ANLN, CD2 and CBLB. Interacts with PDCD6IP and TSG101. Interacts with RIN3. Interacts directly with RET (inactive) and CBLC; upon RET activation by GDNF suggested to dissociate from RET as CBLC:CD2AP complex. Interacts with CGNL1 and SH3BP1; probably part of a complex at cell junctions. Interacts with CAPZA1. As to quaternary structure, (Microbial infection) Interacts (via SH3 domains) with Chikungunya virus non-structural protein 3 (via C-terminus); this interaction plays a role in initiation of viral replication. Post-translationally, phosphorylated on tyrosine residues; probably by c-Abl, Fyn and c-Src. In terms of tissue distribution, widely expressed in fetal and adult tissues.

The protein resides in the cytoplasm. It localises to the cytoskeleton. The protein localises to the cell projection. It is found in the ruffle. Its subcellular location is the cell junction. Seems to act as an adapter protein between membrane proteins and the actin cytoskeleton. In collaboration with CBLC, modulates the rate of RET turnover and may act as regulatory checkpoint that limits the potency of GDNF on neuronal survival. Controls CBLC function, converting it from an inhibitor to a promoter of RET degradation. May play a role in receptor clustering and cytoskeletal polarity in the junction between T-cell and antigen-presenting cell. May anchor the podocyte slit diaphragm to the actin cytoskeleton in renal glomerolus. Also required for cytokinesis. Plays a role in epithelial cell junctions formation. The sequence is that of CD2-associated protein (CD2AP) from Homo sapiens (Human).